We begin with the raw amino-acid sequence, 248 residues long: 5'-nucleotidase SurE (248 aa).

Residues aspartate 8, aspartate 9, serine 39, and asparagine 91 each coordinate a divalent metal cation.

Belongs to the SurE nucleotidase family. A divalent metal cation serves as cofactor.

It localises to the cytoplasm. The enzyme catalyses a ribonucleoside 5'-phosphate + H2O = a ribonucleoside + phosphate. Nucleotidase that shows phosphatase activity on nucleoside 5'-monophosphates. This Neisseria meningitidis serogroup C / serotype 2a (strain ATCC 700532 / DSM 15464 / FAM18) protein is 5'-nucleotidase SurE.